Here is a 342-residue protein sequence, read N- to C-terminus: Elongation factor Ts (342 aa).

Residues 79–82 (TDFV) are involved in Mg(2+) ion dislocation from EF-Tu.

The protein belongs to the EF-Ts family.

It localises to the cytoplasm. Its function is as follows. Associates with the EF-Tu.GDP complex and induces the exchange of GDP to GTP. It remains bound to the aminoacyl-tRNA.EF-Tu.GTP complex up to the GTP hydrolysis stage on the ribosome. This Lactococcus lactis subsp. cremoris (strain MG1363) protein is Elongation factor Ts.